The following is a 485-amino-acid chain: GTPase Der (485 aa).

EngA-type G domains follow at residues 3-167 (PTIA…PEPE) and 176-349 (PVFA…NAAM). GTP is bound by residues 9-16 (GRPNVGKS), 56-60 (DTGGF), 119-122 (NKGE), 182-189 (GRPNVGKS), 229-233 (DTAGV), and 294-297 (NKWD). The region spanning 350–434 (IKMPTPKITR…PLRIQYNVSE (85 aa)) is the KH-like domain. The interval 435-485 (NPYENAEDKPKKKPLRRVSLSNRIEKREGRKEEKNRFKKKTKVSVKKQFSK) is disordered. Over residues 457–469 (RIEKREGRKEEKN) the composition is skewed to basic and acidic residues. Residues 470-485 (RFKKKTKVSVKKQFSK) show a composition bias toward basic residues.

It belongs to the TRAFAC class TrmE-Era-EngA-EngB-Septin-like GTPase superfamily. EngA (Der) GTPase family. In terms of assembly, associates with the 50S ribosomal subunit.

GTPase that plays an essential role in the late steps of ribosome biogenesis. The polypeptide is GTPase Der (Neisseria gonorrhoeae (strain NCCP11945)).